Here is a 108-residue protein sequence, read N- to C-terminus: Nucleoid-associated protein Csal_1459 (108 aa).

Residues 84–93 (EETSRGRMEE) show a composition bias toward basic and acidic residues. A disordered region spans residues 84-108 (EETSRGRMEEATEGMNLPPGFKMPF).

This sequence belongs to the YbaB/EbfC family. As to quaternary structure, homodimer.

It localises to the cytoplasm. It is found in the nucleoid. Its function is as follows. Binds to DNA and alters its conformation. May be involved in regulation of gene expression, nucleoid organization and DNA protection. This Chromohalobacter salexigens (strain ATCC BAA-138 / DSM 3043 / CIP 106854 / NCIMB 13768 / 1H11) protein is Nucleoid-associated protein Csal_1459.